We begin with the raw amino-acid sequence, 239 residues long: Mediator of RNA polymerase II transcription subunit 7 (239 aa).

Disordered stretches follow at residues 1–21 and 43–66; these read MSSL…PPPP and LFVN…DMSV. Positions 46-66 are enriched in basic and acidic residues; the sequence is NDEKGKTKGKEKKSDDRDMSV.

Belongs to the Mediator complex subunit 7 family. In terms of assembly, component of the Mediator complex.

It localises to the nucleus. Its function is as follows. Component of the Mediator complex, a coactivator involved in the regulated transcription of nearly all RNA polymerase II-dependent genes. Mediator functions as a bridge to convey information from gene-specific regulatory proteins to the basal RNA polymerase II transcription machinery. Mediator is recruited to promoters by direct interactions with regulatory proteins and serves as a scaffold for the assembly of a functional preinitiation complex with RNA polymerase II and the general transcription factors. The polypeptide is Mediator of RNA polymerase II transcription subunit 7 (MED7) (Cryptococcus neoformans var. neoformans serotype D (strain B-3501A) (Filobasidiella neoformans)).